Reading from the N-terminus, the 105-residue chain is Large ribosomal subunit protein bL21 (105 aa).

This sequence belongs to the bacterial ribosomal protein bL21 family. Part of the 50S ribosomal subunit. Contacts protein L20.

This protein binds to 23S rRNA in the presence of protein L20. This is Large ribosomal subunit protein bL21 from Rickettsia canadensis (strain McKiel).